Reading from the N-terminus, the 76-residue chain is NKELDPVQKLFVDKIREYRTKRQTSGGPVDAGPEYQQDLDRELFKLKQMYGKADMNTFPNFTFEDPKFEAVEKPQS.

K9, K14, and K47 each carry N6-acetyllysine. N6-acetyllysine; alternate occurs at positions 52 and 67. Residues K52 and K67 each carry the N6-succinyllysine; alternate modification. At K73 the chain carries N6-acetyllysine. S76 carries the post-translational modification Phosphoserine.

The protein belongs to the eukaryotic ATPase subunit F6 family. In terms of assembly, component of the ATP synthase complex composed at least of ATP5F1A/subunit alpha, ATP5F1B/subunit beta, ATP5MC1/subunit c (homooctomer), MT-ATP6/subunit a, MT-ATP8/subunit 8, ATP5ME/subunit e, ATP5MF/subunit f, ATP5MG/subunit g, ATP5MK/subunit k, ATP5MJ/subunit j, ATP5F1C/subunit gamma, ATP5F1D/subunit delta, ATP5F1E/subunit epsilon, ATP5PF/subunit F6, ATP5PB/subunit b, ATP5PD/subunit d, ATP5PO/subunit OSCP. ATP synthase complex consists of a soluble F(1) head domain (subunits alpha(3) and beta(3)) - the catalytic core - and a membrane F(0) domain - the membrane proton channel (subunits c, a, 8, e, f, g, k and j). These two domains are linked by a central stalk (subunits gamma, delta, and epsilon) rotating inside the F1 region and a stationary peripheral stalk (subunits F6, b, d, and OSCP).

The protein localises to the mitochondrion. It localises to the mitochondrion inner membrane. Subunit F6, of the mitochondrial membrane ATP synthase complex (F(1)F(0) ATP synthase or Complex V) that produces ATP from ADP in the presence of a proton gradient across the membrane which is generated by electron transport complexes of the respiratory chain. ATP synthase complex consist of a soluble F(1) head domain - the catalytic core - and a membrane F(1) domain - the membrane proton channel. These two domains are linked by a central stalk rotating inside the F(1) region and a stationary peripheral stalk. During catalysis, ATP synthesis in the catalytic domain of F(1) is coupled via a rotary mechanism of the central stalk subunits to proton translocation. In vivo, can only synthesize ATP although its ATP hydrolase activity can be activated artificially in vitro. Part of the complex F(0) domain. Part of the complex F(0) domain and the peripheric stalk, which acts as a stator to hold the catalytic alpha(3)beta(3) subcomplex and subunit a/ATP6 static relative to the rotary elements. The sequence is that of ATP synthase peripheral stalk subunit F6, mitochondrial from Sus scrofa (Pig).